The sequence spans 581 residues: Arginine--tRNA ligase (581 aa).

The 'HIGH' region motif lies at 131 to 141 (ANPTGPMHVGH).

This sequence belongs to the class-I aminoacyl-tRNA synthetase family. Monomer.

The protein resides in the cytoplasm. It catalyses the reaction tRNA(Arg) + L-arginine + ATP = L-arginyl-tRNA(Arg) + AMP + diphosphate. In Paracoccus denitrificans (strain Pd 1222), this protein is Arginine--tRNA ligase.